The primary structure comprises 1587 residues: Pentafunctional AROM polypeptide (1587 aa).

The 3-dehydroquinate synthase stretch occupies residues 1 to 384; sequence MIEPTKISIL…YEPRASVVAN (384 aa). NAD(+) is bound by residues 44-46, 81-84, 114-116, and Asp-119; these read DTN, EVSK, and GGV. Arg-130 provides a ligand contact to 7-phospho-2-dehydro-3-deoxy-D-arabino-heptonate. 139 to 140 contacts NAD(+); the sequence is TT. Positions 146 and 152 each coordinate 7-phospho-2-dehydro-3-deoxy-D-arabino-heptonate. Lys-161 is an NAD(+) binding site. Asn-162 provides a ligand contact to 7-phospho-2-dehydro-3-deoxy-D-arabino-heptonate. NAD(+)-binding positions include 179–182 and Asn-190; that span reads FLET. Glu-194 provides a ligand contact to Zn(2+). 7-phospho-2-dehydro-3-deoxy-D-arabino-heptonate contacts are provided by residues 194-197 and Lys-250; that span reads EVIK. Glu-260 acts as the Proton acceptor; for 3-dehydroquinate synthase activity in catalysis. Residues 264–268 and His-271 contribute to the 7-phospho-2-dehydro-3-deoxy-D-arabino-heptonate site; that span reads RNLLN. His-271 serves as a coordination point for Zn(2+). Residue His-275 is the Proton acceptor; for 3-dehydroquinate synthase activity of the active site. Residues His-287 and Lys-356 each contribute to the 7-phospho-2-dehydro-3-deoxy-D-arabino-heptonate site. Position 287 (His-287) interacts with Zn(2+). The tract at residues 397 to 842 is EPSP synthase; it reads VFPGVSPKST…WDTLRLKFAV (446 aa). The active-site For EPSP synthase activity is Cys-824. A shikimate kinase region spans residues 864-1055; sequence SASVFIIGMR…KKKQHSFFVS (192 aa). 871–878 is an ATP binding site; the sequence is GMRGAGKT. The tract at residues 1056-1276 is 3-dehydroquinase; it reads LTLPDLRPAG…AAPGQLSATE (221 aa). The active-site Proton acceptor; for 3-dehydroquinate dehydratase activity is His-1179. Residue Lys-1207 is the Schiff-base intermediate with substrate; for 3-dehydroquinate dehydratase activity of the active site. A shikimate dehydrogenase region spans residues 1289-1587; sequence KKRFALFGTP…RDAVLGTKAD (299 aa).

In the N-terminal section; belongs to the sugar phosphate cyclases superfamily. Dehydroquinate synthase family. It in the 2nd section; belongs to the EPSP synthase family. The protein in the 3rd section; belongs to the shikimate kinase family. This sequence in the 4th section; belongs to the type-I 3-dehydroquinase family. In the C-terminal section; belongs to the shikimate dehydrogenase family. As to quaternary structure, homodimer. Requires Zn(2+) as cofactor.

It is found in the cytoplasm. It carries out the reaction 7-phospho-2-dehydro-3-deoxy-D-arabino-heptonate = 3-dehydroquinate + phosphate. The catalysed reaction is 3-dehydroquinate = 3-dehydroshikimate + H2O. It catalyses the reaction shikimate + NADP(+) = 3-dehydroshikimate + NADPH + H(+). The enzyme catalyses shikimate + ATP = 3-phosphoshikimate + ADP + H(+). It carries out the reaction 3-phosphoshikimate + phosphoenolpyruvate = 5-O-(1-carboxyvinyl)-3-phosphoshikimate + phosphate. The protein operates within metabolic intermediate biosynthesis; chorismate biosynthesis; chorismate from D-erythrose 4-phosphate and phosphoenolpyruvate: step 2/7. It functions in the pathway metabolic intermediate biosynthesis; chorismate biosynthesis; chorismate from D-erythrose 4-phosphate and phosphoenolpyruvate: step 3/7. It participates in metabolic intermediate biosynthesis; chorismate biosynthesis; chorismate from D-erythrose 4-phosphate and phosphoenolpyruvate: step 4/7. Its pathway is metabolic intermediate biosynthesis; chorismate biosynthesis; chorismate from D-erythrose 4-phosphate and phosphoenolpyruvate: step 5/7. The protein operates within metabolic intermediate biosynthesis; chorismate biosynthesis; chorismate from D-erythrose 4-phosphate and phosphoenolpyruvate: step 6/7. In terms of biological role, the AROM polypeptide catalyzes 5 consecutive enzymatic reactions in prechorismate polyaromatic amino acid biosynthesis. This Aspergillus clavatus (strain ATCC 1007 / CBS 513.65 / DSM 816 / NCTC 3887 / NRRL 1 / QM 1276 / 107) protein is Pentafunctional AROM polypeptide.